The primary structure comprises 147 residues: Histidine-containing phosphotransfer protein 1 (147 aa).

The HPt domain occupies 38 to 133 (APDFVSEVVT…YDLRNKFQAM (96 aa)). Position 79 is a phosphohistidine (histidine 79).

In terms of processing, two-component system major event consists of a His-to-Asp phosphorelay between a sensor histidine kinase (HK) and a response regulator (RR). In plants, the His-to-Asp phosphorelay involves an additional intermediate named Histidine-containing phosphotransfer protein (HPt). This multistep phosphorelay consists of a His-Asp-His-Asp sequential transfer of a phosphate group between first a His and an Asp of the HK protein, followed by the transfer to a conserved His of the HPt protein and finally the transfer to an Asp in the receiver domain of the RR protein. As to expression, widely expressed.

It localises to the cytoplasm. It is found in the cytosol. Its subcellular location is the nucleus. In terms of biological role, functions as a two-component phosphorelay mediators between cytokinin sensor histidine kinases and response regulators (B-type ARRs). Plays an important role in propagating cytokinin signal transduction through the multistep His-to-Asp phosphorelay. Functions as a positive regulator of the cytokinin signaling pathway. May play a regulatory role in salt and drought tolerance during plant development. This is Histidine-containing phosphotransfer protein 1 from Oryza sativa subsp. japonica (Rice).